We begin with the raw amino-acid sequence, 374 residues long: 2,7-anhydro-N-acetylneuraminate hydratase (374 aa).

NAD(+) contacts are provided by Tyr13, Phe14, Asp35, Asn38, Thr70, Asn72, His75, Glu92, Lys93, Trp162, and Lys163.

It belongs to the Gfo/Idh/MocA family. In terms of assembly, homodimer. NAD(+) is required as a cofactor.

The enzyme catalyses N-acetyl-2,7-anhydro-alpha-neuraminate + H2O = N-acetyl-alpha-neuraminate. Neu5Ac is produced in the presence of NAD(+) or NADH, but not in the presence of FAD. In terms of biological role, hydratase involved in the degradation of sialic acids, which are present in the host mucus layer and represent a much-coveted source of nutrients for R.gnavus, a prevalent member of the normal gut microbiota. Catalyzes the reversible conversion of the dehydrated form of N-acetylneuraminate (Neu5Ac), 2,7-anhydro-N-acetylneuraminate (2,7-AN), to Neu5Ac, allowing growth on 2,7-AN produced by the IT-sialidase NanH. Acts through a multistep mechanism involving a keto intermediate and cycling of NADH/NAD(+). The sequence is that of 2,7-anhydro-N-acetylneuraminate hydratase from Mediterraneibacter gnavus (strain ATCC 29149 / DSM 114966 / JCM 6515 / VPI C7-9) (Ruminococcus gnavus).